A 474-amino-acid polypeptide reads, in one-letter code: Dol-P-Glc:Glc(2)Man(9)GlcNAc(2)-PP-Dol alpha-1,2-glucosyltransferase (474 aa).

Over 1–6 (MAQLEG) the chain is Cytoplasmic. Residues 7 to 27 (YYFSAALSCTFLVSCLLFSAF) form a helical membrane-spanning segment. The Extracellular segment spans residues 28-64 (SRALREPYMDEIFHLPQAQRYCEGRFSLSQWDPMITT). A helical membrane pass occupies residues 65-85 (LPGLYLVSVGVVKPASWLLGW). Residues 86–97 (SEHVICSIGVLR) are Cytoplasmic-facing. Residues 98–118 (FVNLLFSVGNFYLLYLLFRKV) form a helical membrane-spanning segment. Residues 119-126 (QPRNKASS) are Extracellular-facing. A helical transmembrane segment spans residues 127-147 (SIQRILSTLTLAVFPTLYFFN). Residues 148–150 (FLY) lie on the Cytoplasmic side of the membrane. Residues 151–171 (YTEAGSVFFTLFAYLMCLYGN) traverse the membrane as a helical segment. Residues 172-175 (HRTS) lie on the Extracellular side of the membrane. A helical membrane pass occupies residues 176–196 (ALLGFCGFMFRQTNIIWAAFC). Topologically, residues 197 to 256 (AGHLIAQKCSEAWKIELQKKKEERLAPTKGPLSELRRVLQFLLVYAMSLKNLRMLFLLTW) are cytoplasmic. The chain crosses the membrane as a helical span at residues 257-277 (PYVLLLLAFFAFVVVNGGIVV). At 278–283 (GDRSSH) the chain is on the extracellular side. A helical transmembrane segment spans residues 284–304 (EACLHFPQLFYFFSFTAFFSF). The Cytoplasmic portion of the chain corresponds to 305–317 (PHLLSLTKVKTFL). A helical transmembrane segment spans residues 318–338 (SLVWKRRVQFSVVTLVSILLV). The Extracellular segment spans residues 339–365 (WKFTYVHKYLLADNRHYTFYVWKRVFQ). Residues 366 to 386 (RHEVVKYLLVPAYIFAGWAIA) form a helical membrane-spanning segment. Residues 387–392 (DSLKAK) are Cytoplasmic-facing. The chain crosses the membrane as a helical span at residues 393-413 (SIFWNLMFFVCLVASTVPQKL). At 414–436 (LEFRYFILPYIIYRLNIPLPPIS) the chain is on the extracellular side. Residues 437 to 457 (RLVCELGCYTVVNFVTFYIFL) traverse the membrane as a helical segment. Over 458–473 (NKTFQWPNSQDIQRFM) the chain is Cytoplasmic.

The protein belongs to the ALG10 glucosyltransferase family. Interacts with KCNH1; may regulate KCNH1, possibly by regulating its N-glycosylation. Interacts with KCNH2; may reduce KCNH2 sensitivity to classic proarrhythmic drug blockade, possibly by regulating its N-glycosylation.

Its subcellular location is the endoplasmic reticulum membrane. The enzyme catalyses an alpha-D-Glc-(1-&gt;3)-alpha-D-Glc-(1-&gt;3)-alpha-D-Man-(1-&gt;2)-alpha-D-Man-(1-&gt;2)-alpha-D-Man-(1-&gt;3)-[alpha-D-Man-(1-&gt;2)-alpha-D-Man-(1-&gt;3)-[alpha-D-Man-(1-&gt;2)-alpha-D-Man-(1-&gt;6)]-alpha-D-Man-(1-&gt;6)]-beta-D-Man-(1-&gt;4)-beta-D-GlcNAc-(1-&gt;4)-alpha-D-GlcNAc-diphospho-di-trans,poly-cis-dolichol + a di-trans,poly-cis-dolichyl beta-D-glucosyl phosphate = a alpha-D-Glc-(1-&gt;2)-alpha-D-Glc-(1-&gt;3)-alpha-D-Glc-(1-&gt;3)-alpha-D-Man-(1-&gt;2)-alpha-D-Man-(1-&gt;2)-alpha-D-Man-(1-&gt;3)-[alpha-D-Man-(1-&gt;2)-alpha-D-Man-(1-&gt;3)-[alpha-D-Man-(1-&gt;2)-alpha-D-Man-(1-&gt;6)]-alpha-D-Man-(1-&gt;6)]-beta-D-Man-(1-&gt;4)-beta-D-GlcNAc-(1-&gt;4)-alpha-D-GlcNAc-diphospho-di-trans,poly-cis-dolichol + a di-trans,poly-cis-dolichyl phosphate + H(+). It participates in protein modification; protein glycosylation. Functionally, dol-P-Glc:Glc(2)Man(9)GlcNAc(2)-PP-Dol alpha-1,2-glucosyltransferase that operates in the biosynthetic pathway of dolichol-linked oligosaccharides, the glycan precursors employed in protein asparagine (N)-glycosylation. The assembly of dolichol-linked oligosaccharides begins on the cytosolic side of the endoplasmic reticulum membrane and finishes in its lumen. The sequential addition of sugars to dolichol pyrophosphate produces dolichol-linked oligosaccharides containing fourteen sugars, including two GlcNAcs, nine mannoses and three glucoses. Once assembled, the oligosaccharide is transferred from the lipid to nascent proteins by oligosaccharyltransferases. In the lumen of the endoplasmic reticulum, adds the third and last glucose residue from dolichyl phosphate glucose (Dol-P-Glc) onto the lipid-linked oligosaccharide intermediate Glc(2)Man(9)GlcNAc(2)-PP-Dol to produce Glc(3)Man(9)GlcNAc(2)-PP-Dol. This Mus musculus (Mouse) protein is Dol-P-Glc:Glc(2)Man(9)GlcNAc(2)-PP-Dol alpha-1,2-glucosyltransferase.